A 148-amino-acid chain; its full sequence is Nucleoside diphosphate kinase (148 aa).

ATP is bound by residues Lys9, Phe57, Arg85, Thr91, Arg102, and Asn112. The residue at position 91 (Thr91) is a Phosphothreonine. His115 (pros-phosphohistidine intermediate) is an active-site residue. The residue at position 122 (Ser122) is a Phosphoserine.

It belongs to the NDK family. Homotetramer. Requires Mg(2+) as cofactor.

It localises to the cytoplasm. The enzyme catalyses a 2'-deoxyribonucleoside 5'-diphosphate + ATP = a 2'-deoxyribonucleoside 5'-triphosphate + ADP. It catalyses the reaction a ribonucleoside 5'-diphosphate + ATP = a ribonucleoside 5'-triphosphate + ADP. Major role in the synthesis of nucleoside triphosphates other than ATP. The ATP gamma phosphate is transferred to the NDP beta phosphate via a ping-pong mechanism, using a phosphorylated active-site intermediate. The sequence is that of Nucleoside diphosphate kinase from Bacillus licheniformis (strain ATCC 14580 / DSM 13 / JCM 2505 / CCUG 7422 / NBRC 12200 / NCIMB 9375 / NCTC 10341 / NRRL NRS-1264 / Gibson 46).